Here is a 171-residue protein sequence, read N- to C-terminus: Ribosome maturation factor RimM (171 aa).

The PRC barrel domain occupies 96–168; the sequence is EDGFYDHELE…TATITPPEGL (73 aa).

This sequence belongs to the RimM family. Binds ribosomal protein uS19.

It is found in the cytoplasm. Its function is as follows. An accessory protein needed during the final step in the assembly of 30S ribosomal subunit, possibly for assembly of the head region. Essential for efficient processing of 16S rRNA. May be needed both before and after RbfA during the maturation of 16S rRNA. It has affinity for free ribosomal 30S subunits but not for 70S ribosomes. The chain is Ribosome maturation factor RimM from Corynebacterium glutamicum (strain R).